Consider the following 416-residue polypeptide: Protein-glutamine gamma-glutamyltransferase (416 aa).

A signal peptide (tat-type signal) is located at residues 1 to 29 (MHKRRRLLAFATVGAVICTAGFTPSVSQA). Residues 30–85 (ASSGDGEEKGSYAETHGLTADDVESINALNERALTLGQPGKPPKELPPSASAPSRA) constitute a propeptide that is removed on maturation. The segment at 64 to 103 (TLGQPGKPPKELPPSASAPSRAPSDDRETPPAEPLDRMPE) is disordered. Residues 76–85 (PPSASAPSRA) show a composition bias toward low complexity. The span at 86 to 103 (PSDDRETPPAEPLDRMPE) shows a compositional bias: basic and acidic residues. The active site involves cysteine 149. Residues 290-331 (GQDQRGSSDKRKYGDPEAFRPDQGTGLVDMSKDRSIPRSPAK) form a disordered region. Residues 295–309 (GSSDKRKYGDPEAFR) show a composition bias toward basic and acidic residues. Catalysis depends on residues aspartate 340 and histidine 359.

This sequence belongs to the bacterial TGase family. Post-translationally, predicted to be exported by the Tat system. The position of the signal peptide cleavage has not been experimentally proven.

It carries out the reaction L-glutaminyl-[protein] + L-lysyl-[protein] = [protein]-L-lysyl-N(6)-5-L-glutamyl-[protein] + NH4(+). In terms of biological role, catalyzes the cross-linking of proteins and the conjugation of polyamines to proteins. The polypeptide is Protein-glutamine gamma-glutamyltransferase (Streptomyces cinnamoneus (Streptoverticillium cinnamoneum)).